A 156-amino-acid chain; its full sequence is ATP synthase subunit b 2 (156 aa).

The helical transmembrane segment at 11–31 threads the bilayer; it reads LLAFIFFVWFCMKFVWPPIMG.

Belongs to the ATPase B chain family. As to quaternary structure, F-type ATPases have 2 components, F(1) - the catalytic core - and F(0) - the membrane proton channel. F(1) has five subunits: alpha(3), beta(3), gamma(1), delta(1), epsilon(1). F(0) has three main subunits: a(1), b(2) and c(10-14). The alpha and beta chains form an alternating ring which encloses part of the gamma chain. F(1) is attached to F(0) by a central stalk formed by the gamma and epsilon chains, while a peripheral stalk is formed by the delta and b chains.

It is found in the cell inner membrane. F(1)F(0) ATP synthase produces ATP from ADP in the presence of a proton or sodium gradient. F-type ATPases consist of two structural domains, F(1) containing the extramembraneous catalytic core and F(0) containing the membrane proton channel, linked together by a central stalk and a peripheral stalk. During catalysis, ATP synthesis in the catalytic domain of F(1) is coupled via a rotary mechanism of the central stalk subunits to proton translocation. Its function is as follows. Component of the F(0) channel, it forms part of the peripheral stalk, linking F(1) to F(0). The chain is ATP synthase subunit b 2 from Pseudoalteromonas atlantica (strain T6c / ATCC BAA-1087).